Reading from the N-terminus, the 159-residue chain is 17.7 kDa class I heat shock protein (159 aa).

Residues 45–159 (DAAAFAGARI…PDVKSIQISG (115 aa)) form the sHSP domain.

Belongs to the small heat shock protein (HSP20) family. In terms of assembly, may form oligomeric structures.

Its subcellular location is the cytoplasm. In Oryza sativa subsp. japonica (Rice), this protein is 17.7 kDa class I heat shock protein (HSP17.7).